The following is a 374-amino-acid chain: Anhydro-N-acetylmuramic acid kinase (374 aa).

12-19 (GTSLDGVD) serves as a coordination point for ATP.

Belongs to the anhydro-N-acetylmuramic acid kinase family.

The catalysed reaction is 1,6-anhydro-N-acetyl-beta-muramate + ATP + H2O = N-acetyl-D-muramate 6-phosphate + ADP + H(+). It participates in amino-sugar metabolism; 1,6-anhydro-N-acetylmuramate degradation. It functions in the pathway cell wall biogenesis; peptidoglycan recycling. Functionally, catalyzes the specific phosphorylation of 1,6-anhydro-N-acetylmuramic acid (anhMurNAc) with the simultaneous cleavage of the 1,6-anhydro ring, generating MurNAc-6-P. Is required for the utilization of anhMurNAc either imported from the medium or derived from its own cell wall murein, and thus plays a role in cell wall recycling. The chain is Anhydro-N-acetylmuramic acid kinase from Enterobacter sp. (strain 638).